The sequence spans 303 residues: Lysosomal amino acid transporter 1 homolog (303 aa).

The Lumenal portion of the chain corresponds to 1 to 38 (MAEGLRAPPPPGNGSECPDGARWVLRLLGECARDGRDV). A glycan (N-linked (GlcNAc...) asparagine) is linked at Asn13. Residues 36-102 (RDVGSALLGL…LANQLPLQVY (67 aa)) form the PQ-loop 1 domain. A helical transmembrane segment spans residues 39–59 (GSALLGLLSIGCFAAAALPQF). Topologically, residues 60-73 (YQACKTGIMDRALS) are cytoplasmic. A helical membrane pass occupies residues 74-94 (IYFLLGWLGGDLLNLIGSFLA). Residues 95-96 (NQ) are Lumenal-facing. Residues 97-117 (LPLQVYTAVYYVLADLVMLSL) traverse the membrane as a helical segment. The Cytoplasmic portion of the chain corresponds to 118–131 (YGYYKAKNWGTGAT). The helical transmembrane segment at 132-152 (ASINAACLFCLLGTATTLTVL) threads the bilayer. Over 153–182 (SHDTGPAPNPAAFGGRSLLSLGLEGPGPEP) the chain is Lumenal. A helical membrane pass occupies residues 183-203 (ISKTEIIGFAIGSISSVLYLC). Residues 186-251 (TEIIGFAIGS…LKNPEPGQSE (66 aa)) enclose the PQ-loop 2 domain. The Cytoplasmic segment spans residues 204 to 220 (SRLPQIYTNYRRKSTAG). A helical membrane pass occupies residues 221–241 (VSFLLFALVMLGNLLYGTSVL). Residues 242 to 260 (LKNPEPGQSEGDYILHHLP) are Lumenal-facing. A helical membrane pass occupies residues 261–281 (WLIGSLGVLSLDVIISFQFLA). Residues 282-303 (YRTGQPSAGEEREALLAEHGDS) are Cytoplasmic-facing. A Di-leucine motif motif is present at residues 296 to 297 (LL).

It belongs to the laat-1 family.

The protein resides in the lysosome membrane. Its function is as follows. Amino acid transporter that specifically mediates the pH-dependent export of the cationic amino acids arginine, histidine and lysine from lysosomes. The protein is Lysosomal amino acid transporter 1 homolog (SLC66A1) of Gallus gallus (Chicken).